We begin with the raw amino-acid sequence, 360 residues long: Photosystem II protein D1 (360 aa).

The next 3 membrane-spanning stretches (helical) occupy residues 30–47 (YVGW…TAAA), 119–134 (HFLI…QWEL), and 143–157 (WICV…AAFA). H119 is a chlorophyll a binding site. Y127 provides a ligand contact to pheophytin a. Positions 171 and 190 each coordinate [CaMn4O5] cluster. Residues 198–219 (FHMAGVAGMFGGSLFSAMHGSL) traverse the membrane as a helical segment. H199 contacts chlorophyll a. A quinone is bound by residues H216 and 265–266 (SF). A Fe cation-binding site is contributed by H216. H273 provides a ligand contact to Fe cation. The helical transmembrane segment at 275 to 289 (FLAVFPVVCVWLTSM) threads the bilayer. Positions 333, 334, 343, and 345 each coordinate [CaMn4O5] cluster. Positions 346–360 (AAESTTVALSAPAIG) are excised as a propeptide.

It belongs to the reaction center PufL/M/PsbA/D family. In terms of assembly, PSII is composed of 1 copy each of membrane proteins PsbA, PsbB, PsbC, PsbD, PsbE, PsbF, PsbH, PsbI, PsbJ, PsbK, PsbL, PsbM, PsbT, PsbX, PsbY, Psb30/Ycf12, peripheral proteins PsbO, CyanoQ (PsbQ), PsbU, PsbV and a large number of cofactors. It forms dimeric complexes. The cofactor is The D1/D2 heterodimer binds P680, chlorophylls that are the primary electron donor of PSII, and subsequent electron acceptors. It shares a non-heme iron and each subunit binds pheophytin, quinone, additional chlorophylls, carotenoids and lipids. D1 provides most of the ligands for the Mn4-Ca-O5 cluster of the oxygen-evolving complex (OEC). There is also a Cl(-1) ion associated with D1 and D2, which is required for oxygen evolution. The PSII complex binds additional chlorophylls, carotenoids and specific lipids.. Tyr-162 forms a radical intermediate that is referred to as redox-active TyrZ, YZ or Y-Z. In terms of processing, C-terminally processed by CtpA; processing is essential to allow assembly of the oxygen-evolving complex and thus photosynthetic growth.

It is found in the cellular thylakoid membrane. The catalysed reaction is 2 a plastoquinone + 4 hnu + 2 H2O = 2 a plastoquinol + O2. In terms of biological role, photosystem II (PSII) is a light-driven water:plastoquinone oxidoreductase that uses light energy to abstract electrons from H(2)O, generating O(2) and a proton gradient subsequently used for ATP formation. It consists of a core antenna complex that captures photons, and an electron transfer chain that converts photonic excitation into a charge separation. The D1/D2 (PsbA/PsbD) reaction center heterodimer binds P680, the primary electron donor of PSII as well as several subsequent electron acceptors. The chain is Photosystem II protein D1 from Prochlorococcus marinus (strain MIT 9301).